A 354-amino-acid chain; its full sequence is Myosin-binding protein H-like (354 aa).

The disordered stretch occupies residues 1 to 47 (MEAATAPEVAAGSKLKVKEASPADAEPPQASPGQGAGSPTPQLLPPI). Serine 38 is subject to Phosphoserine. One can recognise an Ig-like C2-type 1 domain in the interval 45-139 (PPIEEHPKIW…GGLEATATID (95 aa)). The Fibronectin type-III domain occupies 148 to 238 (PPQSIKLVDV…ETAPITTDLA (91 aa)). An Ig-like C2-type 2 domain is found at 261 to 345 (PKFTQPLADC…VNPLGEASVD (85 aa)). A disulfide bridge connects residues cysteine 282 and cysteine 333. An Omega-N-methylarginine modification is found at arginine 321.

This sequence belongs to the immunoglobulin superfamily. MyBP family. Expressed in heart, with higher expression in the atria. As to expression, expressed in left atrium and ventricle, arteria mammaria interna and skeletal muscle. In terms of tissue distribution, expressed specifically en the left atrium.

The protein localises to the cytoplasm. The protein resides in the myofibril. It is found in the sarcomere. Myosin-binding protein which plays a role in cardiac function. Seems to regulate conduction in the atria and ventricular conduction systems. This is Myosin-binding protein H-like from Homo sapiens (Human).